An 872-amino-acid chain; its full sequence is Alanine--tRNA ligase (872 aa).

The Zn(2+) site is built by His567, His571, Cys669, and His673.

The protein belongs to the class-II aminoacyl-tRNA synthetase family. Zn(2+) is required as a cofactor.

It localises to the cytoplasm. The catalysed reaction is tRNA(Ala) + L-alanine + ATP = L-alanyl-tRNA(Ala) + AMP + diphosphate. Its function is as follows. Catalyzes the attachment of alanine to tRNA(Ala) in a two-step reaction: alanine is first activated by ATP to form Ala-AMP and then transferred to the acceptor end of tRNA(Ala). Also edits incorrectly charged Ser-tRNA(Ala) and Gly-tRNA(Ala) via its editing domain. This is Alanine--tRNA ligase from Streptococcus agalactiae serotype III (strain NEM316).